Reading from the N-terminus, the 500-residue chain is NAD(P)H-quinone oxidoreductase chain 4, chloroplastic (500 aa).

14 helical membrane passes run 4–24 (FPWL…IFFL), 35–55 (YTIC…CYHF), 87–107 (IGPI…AWPI), 113–130 (LFHF…GSFS), 134–154 (LLLF…LLCM), 167–187 (FILY…GVAL), 208–228 (VLEI…SPII), 242–262 (HYST…YGLI), 272–292 (AHSI…IYAA), 305–325 (IAYS…SLTD), 330–350 (GALL…FLAG), 386–406 (LALP…GIIT), 411–431 (LLIP…LTPI), and 462–482 (LFLS…PDFV).

The protein belongs to the complex I subunit 4 family.

It localises to the plastid. Its subcellular location is the chloroplast thylakoid membrane. It catalyses the reaction a plastoquinone + NADH + (n+1) H(+)(in) = a plastoquinol + NAD(+) + n H(+)(out). It carries out the reaction a plastoquinone + NADPH + (n+1) H(+)(in) = a plastoquinol + NADP(+) + n H(+)(out). This chain is NAD(P)H-quinone oxidoreductase chain 4, chloroplastic, found in Nicotiana tomentosiformis (Tobacco).